Reading from the N-terminus, the 63-residue chain is Large ribosomal subunit protein uL29 (63 aa).

The protein belongs to the universal ribosomal protein uL29 family.

The chain is Large ribosomal subunit protein uL29 from Haemophilus influenzae (strain 86-028NP).